Reading from the N-terminus, the 304-residue chain is tRNA dimethylallyltransferase (304 aa).

10-17 (GPTASGKT) provides a ligand contact to ATP. 12-17 (TASGKT) provides a ligand contact to substrate. Interaction with substrate tRNA stretches follow at residues 35–38 (DSAL), 159–163 (QRLSR), and 240–245 (RCVGYR).

It belongs to the IPP transferase family. In terms of assembly, monomer. Mg(2+) is required as a cofactor.

The catalysed reaction is adenosine(37) in tRNA + dimethylallyl diphosphate = N(6)-dimethylallyladenosine(37) in tRNA + diphosphate. In terms of biological role, catalyzes the transfer of a dimethylallyl group onto the adenine at position 37 in tRNAs that read codons beginning with uridine, leading to the formation of N6-(dimethylallyl)adenosine (i(6)A). The polypeptide is tRNA dimethylallyltransferase (Shewanella putrefaciens (strain CN-32 / ATCC BAA-453)).